A 139-amino-acid polypeptide reads, in one-letter code: ATP synthase epsilon chain (139 aa).

This sequence belongs to the ATPase epsilon chain family. As to quaternary structure, F-type ATPases have 2 components, CF(1) - the catalytic core - and CF(0) - the membrane proton channel. CF(1) has five subunits: alpha(3), beta(3), gamma(1), delta(1), epsilon(1). CF(0) has three main subunits: a, b and c.

The protein resides in the cell membrane. In terms of biological role, produces ATP from ADP in the presence of a proton gradient across the membrane. The sequence is that of ATP synthase epsilon chain from Roseiflexus sp. (strain RS-1).